The primary structure comprises 219 residues: U-scoloptoxin(11)-Sm7a (219 aa).

An N-terminal signal peptide occupies residues 1 to 15 (MYLFLMINYFVLANS).

It belongs to the scoloptoxin-11 family. Contains 8 disulfide bonds. Expressed by the venom gland.

It is found in the secreted. In Scolopendra morsitans (Tanzanian blue ringleg centipede), this protein is U-scoloptoxin(11)-Sm7a.